The sequence spans 472 residues: Probable endopolygalacturonase D (472 aa).

Positions 1–16 are cleaved as a signal peptide; sequence MKRGALLVPFVPLALA. Asn24 carries N-linked (GlcNAc...) asparagine glycosylation. A disulfide bridge links Cys129 with Cys144. PbH1 repeat units follow at residues 236–258, 259–297, and 298–319; these read MYYS…DIEH, TENL…DIKS, and STNL…AVSS. Residue Asn300 is glycosylated (N-linked (GlcNAc...) asparagine). Asp312 serves as the catalytic Proton donor. The cysteines at positions 314 and 330 are disulfide-linked. The active site involves His334. 4 PbH1 repeats span residues 349–370, 378–400, 412–433, and 444–467; these read VDGV…RIKS, VSNI…DIQQ, TNGV…SDGK, and CSNF…YPTD. 3 N-linked (GlcNAc...) asparagine glycosylation sites follow: Asn361, Asn385, and Asn419. Disulfide bonds link Cys439-Cys444 and Cys462-Cys469.

Belongs to the glycosyl hydrolase 28 family.

The protein resides in the secreted. The enzyme catalyses (1,4-alpha-D-galacturonosyl)n+m + H2O = (1,4-alpha-D-galacturonosyl)n + (1,4-alpha-D-galacturonosyl)m.. In terms of biological role, involved in maceration and soft-rotting of plant tissue. Hydrolyzes the 1,4-alpha glycosidic bonds of de-esterified pectate in the smooth region of the plant cell wall. In Neosartorya fischeri (strain ATCC 1020 / DSM 3700 / CBS 544.65 / FGSC A1164 / JCM 1740 / NRRL 181 / WB 181) (Aspergillus fischerianus), this protein is Probable endopolygalacturonase D (pgaD).